Consider the following 54-residue polypeptide: UPF0181 protein APJL_0874 (54 aa).

The protein belongs to the UPF0181 family.

The polypeptide is UPF0181 protein APJL_0874 (Actinobacillus pleuropneumoniae serotype 3 (strain JL03)).